We begin with the raw amino-acid sequence, 194 residues long: Adenylate kinase (194 aa).

An ATP-binding site is contributed by 10 to 15 (GAGKGT). The tract at residues 30–59 (STGDMLRAAVAQQSEIGKRAKAVMDAGQLV) is NMP. AMP contacts are provided by residues Thr31, Arg36, 57-59 (QLV), 85-88 (GYPR), and Gln92. Positions 126-142 (SRVAETIAKGGQVRSDD) are LID. Arg127 provides a ligand contact to ATP. Positions 139 and 150 each coordinate AMP. Ala178 lines the ATP pocket.

This sequence belongs to the adenylate kinase family. In terms of assembly, monomer.

It localises to the cytoplasm. The enzyme catalyses AMP + ATP = 2 ADP. Its pathway is purine metabolism; AMP biosynthesis via salvage pathway; AMP from ADP: step 1/1. Functionally, catalyzes the reversible transfer of the terminal phosphate group between ATP and AMP. Plays an important role in cellular energy homeostasis and in adenine nucleotide metabolism. The sequence is that of Adenylate kinase from Brucella abortus (strain S19).